Consider the following 206-residue polypeptide: uncharacterized protein (206 aa).

Residues 81–132 (EEQQQQQHHVHGPGCSHGHHHDSHANDGHHDEHHDEHHDHVNPDDVEDEFPR) are disordered. Residues 82-96 (EQQQQQHHVHGPGCS) show a composition bias toward low complexity. Basic and acidic residues predominate over residues 103–123 (SHANDGHHDEHHDEHHDHVNP). Residues 150 to 166 (YLTALCLLPIIGSLFSI) traverse the membrane as a helical segment.

It localises to the membrane. This is an uncharacterized protein from Dictyostelium discoideum (Social amoeba).